A 214-amino-acid polypeptide reads, in one-letter code: Ribonuclease P protein component 3 (214 aa).

This sequence belongs to the eukaryotic/archaeal RNase P protein component 3 family. As to quaternary structure, consists of a catalytic RNA component and at least 4-5 protein subunits.

The protein localises to the cytoplasm. The catalysed reaction is Endonucleolytic cleavage of RNA, removing 5'-extranucleotides from tRNA precursor.. Its function is as follows. Part of ribonuclease P, a protein complex that generates mature tRNA molecules by cleaving their 5'-ends. The chain is Ribonuclease P protein component 3 from Thermococcus gammatolerans (strain DSM 15229 / JCM 11827 / EJ3).